The following is a 428-amino-acid chain: GTPase Obg (428 aa).

One can recognise an Obg domain in the interval 1-158 (MFIDKAKVFI…LSIVLELKLL (158 aa)). Positions 159–331 (ADVGLLGFPN…VIKEAARMLK (173 aa)) constitute an OBG-type G domain. Residues 165–172 (GFPNVGKS), 190–194 (FTTLK), 212–215 (DIPG), 282–285 (NKSD), and 312–314 (SAA) contribute to the GTP site. Mg(2+)-binding residues include S172 and T192. Positions 345 to 428 (MYIPEEKRFT…LNDFEFEYLL (84 aa)) constitute an OCT domain.

This sequence belongs to the TRAFAC class OBG-HflX-like GTPase superfamily. OBG GTPase family. Monomer. Requires Mg(2+) as cofactor.

It localises to the cytoplasm. An essential GTPase which binds GTP, GDP and possibly (p)ppGpp with moderate affinity, with high nucleotide exchange rates and a fairly low GTP hydrolysis rate. Plays a role in control of the cell cycle, stress response, ribosome biogenesis and in those bacteria that undergo differentiation, in morphogenesis control. The chain is GTPase Obg from Clostridium botulinum (strain Eklund 17B / Type B).